The primary structure comprises 596 residues: Zinc finger CCCH domain-containing protein 64 (596 aa).

Disordered regions lie at residues 243-263 (LSPTPTSTMSPAELSAKPPKT) and 272-291 (DGAAESKKRPNDSDSDSQYW). 2 C3H1-type zinc fingers span residues 303–331 (SQGEKLCFKFVCSGSCPRGEDCHFQHNAE) and 335–363 (QCRRGVCLDLIIKGKCEKGPECSYKHEFQ).

The polypeptide is Zinc finger CCCH domain-containing protein 64 (Arabidopsis thaliana (Mouse-ear cress)).